Consider the following 339-residue polypeptide: Protein FAM76B (339 aa).

At alanine 2 the chain carries N-acetylalanine. 2 positions are modified to phosphoserine: serine 22 and serine 148. Positions 144 to 243 (EQRKSLGSSH…INQSADSGGT (100 aa)) are disordered. A compositionally biased stretch (low complexity) spans 148–160 (SLGSSHSNSSSSS). Residues 167-189 (HHSKHHHHHHHHHHRHSSGHHKV) show a composition bias toward basic residues. Serine 193 is modified (phosphoserine). The residue at position 215 (threonine 215) is a Phosphothreonine. Basic and acidic residues predominate over residues 215 to 224 (TPKKKPKLES). A compositionally biased stretch (polar residues) spans 228–243 (NGDSSSINQSADSGGT). The stretch at 248–328 (LISQLKEEVM…QVAALSKGKK (81 aa)) forms a coiled coil.

This sequence belongs to the FAM76 family. In terms of assembly, interacts with HNRNPA2B1 (via C-terminus); the interaction results in retention of HNRNPA2B1 in the nucleus and inhibition of the NF-kappa-B-mediated inflammatory pathway.

It is found in the nucleus speckle. Functionally, negatively regulates the NF-kappa-B-mediated inflammatory pathway by preventing the translocation of HNRNPA2B1 from the nucleus to the cytoplasm. Inhibits the PI3K/Akt/NF-kappa-B pathway-mediated polarization of M1 macrophages by binding to and stabilizing PIK3CD mRNA, resulting in increased levels of PIK3CD protein and increased levels of phosphorylated downstream target AKT which leads to decreased NF-kappa-B signaling. The sequence is that of Protein FAM76B (Fam76b) from Mus musculus (Mouse).